Reading from the N-terminus, the 223-residue chain is 7-cyano-7-deazaguanine synthase (223 aa).

Residue 12 to 22 coordinates ATP; the sequence is FSGGQDSTTCL. Residues C189, C198, C201, and C204 each contribute to the Zn(2+) site.

This sequence belongs to the QueC family. Homodimer. Zn(2+) is required as a cofactor.

The catalysed reaction is 7-carboxy-7-deazaguanine + NH4(+) + ATP = 7-cyano-7-deazaguanine + ADP + phosphate + H2O + H(+). Its pathway is purine metabolism; 7-cyano-7-deazaguanine biosynthesis. Catalyzes the ATP-dependent conversion of 7-carboxy-7-deazaguanine (CDG) to 7-cyano-7-deazaguanine (preQ(0)). The chain is 7-cyano-7-deazaguanine synthase from Halalkalibacterium halodurans (strain ATCC BAA-125 / DSM 18197 / FERM 7344 / JCM 9153 / C-125) (Bacillus halodurans).